The primary structure comprises 64 residues: Large ribosomal subunit protein uL29 (64 aa).

The protein belongs to the universal ribosomal protein uL29 family.

The sequence is that of Large ribosomal subunit protein uL29 from Psychrobacter sp. (strain PRwf-1).